The chain runs to 278 residues: DNA repair protein RecO (278 aa).

Positions 1–12 (MGTNDALTSTED) are enriched in polar residues. The disordered stretch occupies residues 1–41 (MGTNDALTSTEDAVTAGANDAPLPAPPEPPRKARRATSRTS).

This sequence belongs to the RecO family.

In terms of biological role, involved in DNA repair and RecF pathway recombination. This Burkholderia orbicola (strain AU 1054) protein is DNA repair protein RecO.